The primary structure comprises 100 residues: Integration host factor subunit alpha (100 aa).

It belongs to the bacterial histone-like protein family. Heterodimer of an alpha and a beta chain.

Functionally, this protein is one of the two subunits of integration host factor, a specific DNA-binding protein that functions in genetic recombination as well as in transcriptional and translational control. Involved in hydrogenase gene expression. In Rhodobacter capsulatus (Rhodopseudomonas capsulata), this protein is Integration host factor subunit alpha (ihfA).